A 274-amino-acid chain; its full sequence is 1D-myo-inositol 2-acetamido-2-deoxy-alpha-D-glucopyranoside deacetylase 2 (274 aa).

Residues His6, Asp9, and His140 each contribute to the Zn(2+) site.

It belongs to the MshB deacetylase family. Requires Zn(2+) as cofactor.

It carries out the reaction 1D-myo-inositol 2-acetamido-2-deoxy-alpha-D-glucopyranoside + H2O = 1D-myo-inositol 2-amino-2-deoxy-alpha-D-glucopyranoside + acetate. Its function is as follows. Catalyzes the deacetylation of 1D-myo-inositol 2-acetamido-2-deoxy-alpha-D-glucopyranoside (GlcNAc-Ins) in the mycothiol biosynthesis pathway. The chain is 1D-myo-inositol 2-acetamido-2-deoxy-alpha-D-glucopyranoside deacetylase 2 from Saccharopolyspora erythraea (strain ATCC 11635 / DSM 40517 / JCM 4748 / NBRC 13426 / NCIMB 8594 / NRRL 2338).